The chain runs to 965 residues: Argonaute protein wago-4 (965 aa).

A disordered region spans residues 1–34 (MPALPPVYTPSGAPSSVHAPPAVPPVPVPTQPLR). Residues 10 to 20 (PSGAPSSVHAP) are compositionally biased toward low complexity. A compositionally biased stretch (pro residues) spans 21 to 30 (PAVPPVPVPT). A PAZ domain is found at 318 to 428 (PILDKLKEIT…YPMELLKISS (111 aa)). The Piwi domain maps to 594–924 (TFVFIITDDS…YAKRGRNLWN (331 aa)).

Belongs to the argonaute family. WAGO subfamily. Interacts with znfx-1; the interaction promotes the transmission of epigenetic information across generations. May interact with mina-1. As to expression, expressed in the hermaphrodite germline and in oocytes. Expressed at a low level in the male germline. Not expressed in the soma of hermaphrodites or males.

The protein resides in the cytoplasm. Its subcellular location is the perinuclear region. The protein localises to the cytoplasmic granule. Its function is as follows. Argonaute protein which is involved in the endogenous small interfering RNA (endo-siRNA) pathway and is required for RNA-mediated gene silencing (RNAi) in the germline. Interacts with secondary 22G-RNAs, which are RNA-dependent RNA polymerase-derived endo-siRNAs, typically 22 nucleotides in length with a 5'guanosine residue. Also interacts with the mRNA targets of 22G-RNAs. Associates with znfx-1 to mediate small RNA-directed transgenerational epigenetic inheritance of both germline- and soma-expressed genes. This Caenorhabditis elegans protein is Argonaute protein wago-4.